A 252-amino-acid chain; its full sequence is Glucosamine-6-phosphate deaminase (252 aa).

Catalysis depends on Asp64, which acts as the Proton acceptor; for enolization step. Asn130 (for ring-opening step) is an active-site residue. His132 serves as the catalytic Proton acceptor; for ring-opening step. Glu137 (for ring-opening step) is an active-site residue.

This sequence belongs to the glucosamine/galactosamine-6-phosphate isomerase family. NagB subfamily.

It carries out the reaction alpha-D-glucosamine 6-phosphate + H2O = beta-D-fructose 6-phosphate + NH4(+). It participates in amino-sugar metabolism; N-acetylneuraminate degradation; D-fructose 6-phosphate from N-acetylneuraminate: step 5/5. Its function is as follows. Catalyzes the reversible isomerization-deamination of glucosamine 6-phosphate (GlcN6P) to form fructose 6-phosphate (Fru6P) and ammonium ion. This Exiguobacterium sibiricum (strain DSM 17290 / CCUG 55495 / CIP 109462 / JCM 13490 / 255-15) protein is Glucosamine-6-phosphate deaminase.